The following is a 349-amino-acid chain: Alpha-centractin (349 aa).

Met1 is subject to N-acetylmethionine.

The protein belongs to the actin family. ARP1 subfamily. In terms of assembly, part of the ACTR1A/ACTB filament around which the dynactin complex is built. The filament contains 8 copies of ACTR1A and 1 ACTB. Interacts with dynein and adapters such as BICD2. Interacts with BCCIP (isoform 2/alpha).

Its subcellular location is the cytoplasm. The protein localises to the cytoskeleton. It is found in the microtubule organizing center. The protein resides in the centrosome. It localises to the cell cortex. In terms of biological role, part of the ACTR1A/ACTB filament around which the dynactin complex is built. The dynactin multiprotein complex activates the molecular motor dynein for ultra-processive transport along microtubules. This chain is Alpha-centractin (ACTR1A), found in Sus scrofa (Pig).